Reading from the N-terminus, the 526-residue chain is Peptide chain release factor 3 (526 aa).

The region spanning Gly-8–Gln-277 is the tr-type G domain. GTP is bound by residues Ser-17–Thr-24, Asp-85–His-89, and Asn-139–Asp-142.

Belongs to the TRAFAC class translation factor GTPase superfamily. Classic translation factor GTPase family. PrfC subfamily.

The protein localises to the cytoplasm. Increases the formation of ribosomal termination complexes and stimulates activities of RF-1 and RF-2. It binds guanine nucleotides and has strong preference for UGA stop codons. It may interact directly with the ribosome. The stimulation of RF-1 and RF-2 is significantly reduced by GTP and GDP, but not by GMP. In Aliivibrio fischeri (strain ATCC 700601 / ES114) (Vibrio fischeri), this protein is Peptide chain release factor 3.